Here is a 567-residue protein sequence, read N- to C-terminus: ETHYLENE INSENSITIVE 3-like 3 protein (567 aa).

Residues 24-44 adopt a coiled-coil conformation; it reads NVAEIDVSDEEIDADDLERRM. 2 disordered regions span residues 55–81 and 286–393; these read KERQ…AQRK and IQQP…RNIL. Positions 69–79 are enriched in basic and acidic residues; sequence ETPKKISDQAQ. The DNA-binding element occupies 162–288; the sequence is SQFVLQDLQD…LNQEESLIQQ (127 aa). Positions 286-299 are enriched in polar residues; the sequence is IQQPSSDNGNSNVT. A compositionally biased stretch (basic and acidic residues) spans 300-312; that stretch reads ETHRRGNNADRRK. Over residues 363–372 the composition is skewed to basic residues; the sequence is KHRRRKRPRI.

This sequence belongs to the EIN3 family. As to quaternary structure, interacts with MYB72.

It localises to the nucleus. Functionally, probable transcription factor that may be involved in the ethylene response pathway. The sequence is that of ETHYLENE INSENSITIVE 3-like 3 protein (EIL3) from Arabidopsis thaliana (Mouse-ear cress).